The primary structure comprises 255 residues: Protein SCO2 homolog, mitochondrial (255 aa).

The transit peptide at 1-41 (MLLALGPKAWPKLSQFKPLLRISGGETLHRNSRHWAGQGQR) directs the protein to the mitochondrion. Residues 42-49 (QGPGLRTR) are Mitochondrial matrix-facing. Residues 50 to 67 (LLITALFGAGLGWAWLAA) form a helical membrane-spanning segment. Residues 68 to 255 (RAEKEQWRQQ…HIAAFHSVLP (188 aa)) are Mitochondrial intermembrane-facing. The Thioredoxin domain occupies 74-248 (WRQQQRTEAL…IVESIRRHIA (175 aa)). Cu cation-binding residues include Cys122, Cys126, and His213. An intrachain disulfide couples Cys122 to Cys126.

The protein belongs to the SCO1/2 family. In terms of assembly, homodimer. Interacts with COA6. Found in a complex with TMEM177, COX20, COA6, MT-CO2/COX2, COX18 and SCO1. Interacts with TMEM177 in a COX20-dependent manner. Interacts with COX20 in a MT-CO2/COX2- and COX18-dependent manner. Interacts with COX16. Expressed in retina, retinal pigment epithelium, and sclera.

The protein resides in the mitochondrion inner membrane. Its function is as follows. Copper metallochaperone essential for the synthesis and maturation of cytochrome c oxidase subunit II (MT-CO2/COX2) by facilitating the incorporation of copper into the Cu(A) site of MT-CO2/COX2. Could also act as a thiol-disulfide oxidoreductase to regulate the redox state of the cysteines in SCO1 during maturation of MT-CO2/COX2. This is Protein SCO2 homolog, mitochondrial (Sco2) from Mus musculus (Mouse).